Here is a 367-residue protein sequence, read N- to C-terminus: Histone RNA hairpin-binding protein (367 aa).

Residues 1–12 (MAQKTPTKGTRS) are compositionally biased toward polar residues. Disordered regions lie at residues 1–24 (MAQK…SPIK) and 49–200 (EVTE…HWEE). A compositionally biased stretch (basic and acidic residues) spans 57–73 (LASRLEEERRCKSESRR). Residues 147–156 (SNASTINEGA) show a composition bias toward polar residues. Low complexity predominate over residues 183 to 192 (SDSSSVASSP). Residues 206–275 (CTDEAVLKRR…KWKRSLYEYC (70 aa)) form an RNA-binding region. A disordered region spans residues 342-367 (MDESTLKASTNTDPSAPTDFSKMSSH). The segment covering 347–356 (LKASTNTDPS) has biased composition (polar residues).

Belongs to the SLBP family. In terms of processing, ubiquitinated by the CBC(fem-1) (Cul2-ElonginB-ElonginC) E3 ubiquitin-protein ligase complex, leading to its degradation.

Involved in histone pre-mRNA 3' processing. Required for chromosome condensation, progression of cell death and morphogenesis. This Caenorhabditis elegans protein is Histone RNA hairpin-binding protein (cdl-1).